The following is a 420-amino-acid chain: RING finger protein 39 (420 aa).

The RING-type zinc-finger motif lies at 88-135; it reads CPLCGGSFEDPVLLACEHSFCRACLARRWGTPPATGTEASPTACPCCG. The B30.2/SPRY domain occupies 210 to 420; the sequence is DDLPEDYPVV…APLRIVPAES (211 aa). The disordered stretch occupies residues 246–265; the sequence is DRRSVQLAPPGTPAPPDGPK.

Its subcellular location is the cytoplasm. It carries out the reaction S-ubiquitinyl-[E2 ubiquitin-conjugating enzyme]-L-cysteine + [acceptor protein]-L-lysine = [E2 ubiquitin-conjugating enzyme]-L-cysteine + N(6)-ubiquitinyl-[acceptor protein]-L-lysine.. It functions in the pathway protein modification; protein ubiquitination. Its function is as follows. Plays an inhibitory role in anti-RNA viral innate immunity by targeting the adapter DDX3X and promoting its 'Lys-48'-linked polyubiquitination. Alternatively, enhances the cGAS-STING pathway activation by promoting 'Lys-63'-linked ubiquitination of STING1, facilitating the STING1-TBK1 complex formation and STING1 activation. The polypeptide is RING finger protein 39 (RNF39) (Pan troglodytes (Chimpanzee)).